The sequence spans 236 residues: Sugar fermentation stimulation protein homolog (236 aa).

Belongs to the SfsA family.

The protein is Sugar fermentation stimulation protein homolog of Desulfotalea psychrophila (strain LSv54 / DSM 12343).